The sequence spans 244 residues: U11/U12 small nuclear ribonucleoprotein 35 kDa protein (244 aa).

The RRM domain occupies 51–129 (LTLFVARLNL…HEIFVDYELE (79 aa)). Basic and acidic residues predominate over residues 146–162 (GKKESGQLRFGGRDRPF). Residues 146–244 (GKKESGQLRF…KSRDKRDRSK (99 aa)) form a disordered region. A Glycyl lysine isopeptide (Lys-Gly) (interchain with G-Cter in SUMO2) cross-link involves residue Lys172. 2 stretches are compositionally biased toward basic and acidic residues: residues 173-185 (NEPH…ERRE) and 192-244 (RHWD…DRSK).

As to quaternary structure, component of the U11/U12 snRNPs that are part of the U12-type spliceosome.

Its subcellular location is the nucleus. The sequence is that of U11/U12 small nuclear ribonucleoprotein 35 kDa protein (Snrnp35) from Mus musculus (Mouse).